A 351-amino-acid polypeptide reads, in one-letter code: Ion-translocating oxidoreductase complex subunit D (351 aa).

4 helical membrane-spanning segments follow: residues 18 to 38, 40 to 60, 87 to 107, and 121 to 141; these read IMLL…YFFG, GSLI…GAVL, LPPL…IVIA, and PAMV…TSWL. Thr-185 carries the FMN phosphoryl threonine modification. 5 helical membrane passes run 211-231, 241-261, 264-284, 298-318, and 320-340; these read VLAG…GLLL, IPVS…MIAP, FASP…FFIA, LIFG…GGYP, and GVAF…HYTQ.

Belongs to the NqrB/RnfD family. In terms of assembly, the complex is composed of six subunits: RnfA, RnfB, RnfC, RnfD, RnfE and RnfG. It depends on FMN as a cofactor.

Its subcellular location is the cell inner membrane. Part of a membrane-bound complex that couples electron transfer with translocation of ions across the membrane. This Yersinia pseudotuberculosis serotype O:1b (strain IP 31758) protein is Ion-translocating oxidoreductase complex subunit D.